We begin with the raw amino-acid sequence, 446 residues long: 3-phosphoshikimate 1-carboxyvinyltransferase (446 aa).

Residues K30, S31, and R35 each coordinate 3-phosphoshikimate. K30 provides a ligand contact to phosphoenolpyruvate. Phosphoenolpyruvate-binding residues include G112 and R140. Positions 186, 187, 188, 215, 334, and 361 each coordinate 3-phosphoshikimate. Position 188 (Q188) interacts with phosphoenolpyruvate. E334 acts as the Proton acceptor in catalysis. R365, R406, and K431 together coordinate phosphoenolpyruvate.

Belongs to the EPSP synthase family. In terms of assembly, monomer.

It is found in the cytoplasm. It carries out the reaction 3-phosphoshikimate + phosphoenolpyruvate = 5-O-(1-carboxyvinyl)-3-phosphoshikimate + phosphate. The protein operates within metabolic intermediate biosynthesis; chorismate biosynthesis; chorismate from D-erythrose 4-phosphate and phosphoenolpyruvate: step 6/7. Catalyzes the transfer of the enolpyruvyl moiety of phosphoenolpyruvate (PEP) to the 5-hydroxyl of shikimate-3-phosphate (S3P) to produce enolpyruvyl shikimate-3-phosphate and inorganic phosphate. This Streptomyces avermitilis (strain ATCC 31267 / DSM 46492 / JCM 5070 / NBRC 14893 / NCIMB 12804 / NRRL 8165 / MA-4680) protein is 3-phosphoshikimate 1-carboxyvinyltransferase.